The chain runs to 328 residues: Flotillin-like protein FloA (328 aa).

2 consecutive transmembrane segments (helical) span residues Met-1–Phe-21 and Val-26–Gly-46.

It belongs to the flotillin-like FloA family. Homooligomerizes.

The protein localises to the cell membrane. The protein resides in the membrane raft. Found in functional membrane microdomains (FMM) that may be equivalent to eukaryotic membrane rafts. FMMs are highly dynamic and increase in number as cells age. Flotillins are thought to be important factors in membrane fluidity. This is Flotillin-like protein FloA from Staphylococcus haemolyticus (strain JCSC1435).